The following is a 131-amino-acid chain: Peptide methionine sulfoxide reductase MsrB (131 aa).

One can recognise a MsrB domain in the interval 8-130 (DAEWRAQLTD…NSVCLDLKRS (123 aa)). Residues C47, C50, C96, and C99 each coordinate Zn(2+). Catalysis depends on C119, which acts as the Nucleophile.

This sequence belongs to the MsrB Met sulfoxide reductase family. Zn(2+) serves as cofactor.

It carries out the reaction L-methionyl-[protein] + [thioredoxin]-disulfide + H2O = L-methionyl-(R)-S-oxide-[protein] + [thioredoxin]-dithiol. The polypeptide is Peptide methionine sulfoxide reductase MsrB (Alkalilimnicola ehrlichii (strain ATCC BAA-1101 / DSM 17681 / MLHE-1)).